A 424-amino-acid chain; its full sequence is MSKQLQARRLEGIDHNPWVEFTRLSKEYDVVNLGQGFPDFSPPDFAVQAFQQATTGNFMLNQYTSAFGYPPLTKILASFFGKLLGQEMDPLKNVLVTVGAYGALFTAFQALVDEGDEVIIIEPAFNCYEPMTMMAGGRPVFVSLRLSPAPKGQLGSSNDWQLDPTELASKFTPRTKILVLNTPNNPLGKVFSKKELELVAALCQQHDVLCFSDEVYQWLVYDGHQHISIASLPGMWERTLTIGSAGKSFSATGWKVGWVMGPDNIMKHLRTVHQNSIFHCPTQAQAAVAQCFEREQQHFGQPSSYFLQLPQAMGLNRDHMIQSLQSVGLKPLIPQGSYFLIADISDFKSSMPDLPGAMDEPYDTRFAKWMIKNKGLSAIPVSTFYSQPHHKDFDHYIRFCFVKDKATLQAMDKRLCSWKGEPQA.

Gly-36 is a binding site for substrate. N6-succinyllysine is present on Lys-82. Substrate is bound at residue Asn-185. At Lys-247 the chain carries N6-(pyridoxal phosphate)lysine. Arg-398 is a binding site for substrate. The residue at position 413 (Lys-413) is an N6-succinyllysine.

This sequence belongs to the class-I pyridoxal-phosphate-dependent aminotransferase family. In terms of assembly, homodimer. The cofactor is pyridoxal 5'-phosphate.

The protein localises to the cytoplasm. It localises to the cytosol. It catalyses the reaction L-kynurenine + 2-oxoglutarate = kynurenate + L-glutamate + H2O. The enzyme catalyses 3-phenylpyruvate + L-glutamine = 2-oxoglutaramate + L-phenylalanine. The catalysed reaction is an S-substituted L-cysteine + H2O = a thiol + pyruvate + NH4(+). It participates in amino-acid degradation; L-kynurenine degradation; kynurenate from L-kynurenine: step 1/2. Its function is as follows. Catalyzes the irreversible transamination of the L-tryptophan metabolite L-kynurenine to form kynurenic acid (KA), an intermediate in the tryptophan catabolic pathway which is also a broad spectrum antagonist of the three ionotropic excitatory amino acid receptors among others. Metabolizes the cysteine conjugates of certain halogenated alkenes and alkanes to form reactive metabolites. Catalyzes the beta-elimination of S-conjugates and Se-conjugates of L-(seleno)cysteine, resulting in the cleavage of the C-S or C-Se bond. The polypeptide is Kynurenine--oxoglutarate transaminase 1 (Kyat1) (Mus musculus (Mouse)).